A 170-amino-acid chain; its full sequence is uncharacterized protein (170 aa).

This is an uncharacterized protein from Treponema pallidum (strain Nichols).